The following is a 428-amino-acid chain: Light-independent protochlorophyllide reductase subunit N (428 aa).

Residues Cys-30, Cys-55, and Cys-116 each contribute to the [4Fe-4S] cluster site.

Belongs to the BchN/ChlN family. In terms of assembly, protochlorophyllide reductase is composed of three subunits; BchL, BchN and BchB. Forms a heterotetramer of two BchB and two BchN subunits. It depends on [4Fe-4S] cluster as a cofactor.

The enzyme catalyses chlorophyllide a + oxidized 2[4Fe-4S]-[ferredoxin] + 2 ADP + 2 phosphate = protochlorophyllide a + reduced 2[4Fe-4S]-[ferredoxin] + 2 ATP + 2 H2O. It participates in porphyrin-containing compound metabolism; bacteriochlorophyll biosynthesis (light-independent). In terms of biological role, component of the dark-operative protochlorophyllide reductase (DPOR) that uses Mg-ATP and reduced ferredoxin to reduce ring D of protochlorophyllide (Pchlide) to form chlorophyllide a (Chlide). This reaction is light-independent. The NB-protein (BchN-BchB) is the catalytic component of the complex. The sequence is that of Light-independent protochlorophyllide reductase subunit N from Bradyrhizobium sp. (strain BTAi1 / ATCC BAA-1182).